The chain runs to 369 residues: Cell division protein FtsZ (369 aa).

GTP is bound by residues 27-31, 119-121, Glu150, and Asn189; these read GAGNN and GTG.

Belongs to the FtsZ family. Homodimer. Polymerizes to form a dynamic ring structure in a strictly GTP-dependent manner. Interacts directly with several other division proteins.

It localises to the cytoplasm. Essential cell division protein that forms a contractile ring structure (Z ring) at the future cell division site. The regulation of the ring assembly controls the timing and the location of cell division. One of the functions of the FtsZ ring is to recruit other cell division proteins to the septum to produce a new cell wall between the dividing cells. Binds GTP and shows GTPase activity. This Mycoplasma genitalium (strain ATCC 33530 / DSM 19775 / NCTC 10195 / G37) (Mycoplasmoides genitalium) protein is Cell division protein FtsZ.